Consider the following 872-residue polypeptide: MALPNKVKKLLSDAEQLSDYRDCSSYFYKWLFNEFSKQPVGNLINARAEFIDRLLIKLFHVYDLAHEPDLALIAVGGYGRGELHPYSDIDFLLLVTQQPNAEISEKIGQFVTMLWDLNLEIGHSVRTIAQAIEQKREDVTFATSLLESRLIFGNHIEFEKLKNHIIDTPVWRSNEFFLAKVQEQHLRHRKCHGTAYNLEPNIKENPGGLRDLQTIIWVAKKHFRAETLQELISHGYLTHEEFQELSECLENLWNIRFALHLAAGRSENRLLFDHQPQAAEILGFGSDGKSSVERMMKRLFRIMSRVRELNLMLLAYFEQSISPKHHQPIIQELDRNFERIGNQIKVKSPSVFFRRDQLFMLFEHIADNPEITHIYPSTIRTIRQVRRRLLGDLQDYAACREAFLRLIKHPNGMGRAFTLMHKHGMLAAYLPQWRNIFGQMQFDLFHAYTVDEHTHRLINNIYQYFDKTGVSEFPICSEIVTRMDKPELLYLAGIFHDIAKGRGGDHSELGAVDALAFAKLHAFSVADGKLIAWLVSNHLLMSVTAQRKDINDPGVIKDFATRVKTERQLDYLYCLTVADIRATNDNLWNDWKNTLLRELYLHTQHALRLGLENPMDQRDQIRDKKHQAKQRLLNLGYMEDQIDLIWSRFKANYFTAFSEQQISWHSQHLVNSEDLSQPSVIVSNKAMHGGTQVFVYSPYSGPLFARLVSVIGSKKAQIQHAQVLTTKDGYVLFNFVILEVNGEPIASGRAQSIKRALEQALFEPRKKIRFKKNRSQRFKDFNIKPKIVLRPHPRKDRSLIEIQAIDIPGLLTKIAEVFQAHLLHIHAARITTVGQRAEDFFVVSNNEYQALTDEEQAKIHQALRKKLNAETE.

The segment at 1–332 (MALPNKVKKL…PKHHQPIIQE (332 aa)) is uridylyltransferase. A uridylyl-removing region spans residues 333-691 (LDRNFERIGN…VSNKAMHGGT (359 aa)). One can recognise an HD domain in the interval 450 to 572 (VDEHTHRLIN…VKTERQLDYL (123 aa)). 2 ACT domains span residues 692–773 (QVFV…FKKN) and 799–872 (LIEI…AETE).

The protein belongs to the GlnD family. Mg(2+) serves as cofactor.

The enzyme catalyses [protein-PII]-L-tyrosine + UTP = [protein-PII]-uridylyl-L-tyrosine + diphosphate. The catalysed reaction is [protein-PII]-uridylyl-L-tyrosine + H2O = [protein-PII]-L-tyrosine + UMP + H(+). Uridylyltransferase (UTase) activity is inhibited by glutamine, while glutamine activates uridylyl-removing (UR) activity. Its function is as follows. Modifies, by uridylylation and deuridylylation, the PII regulatory proteins (GlnB and homologs), in response to the nitrogen status of the cell that GlnD senses through the glutamine level. Under low glutamine levels, catalyzes the conversion of the PII proteins and UTP to PII-UMP and PPi, while under higher glutamine levels, GlnD hydrolyzes PII-UMP to PII and UMP (deuridylylation). Thus, controls uridylylation state and activity of the PII proteins, and plays an important role in the regulation of nitrogen assimilation and metabolism. This Pseudoalteromonas translucida (strain TAC 125) protein is Bifunctional uridylyltransferase/uridylyl-removing enzyme.